Here is a 406-residue protein sequence, read N- to C-terminus: MIVQPKVRGFICTTAHPEGCARHVGEWINYAKQQPSLTGGPQKVLIIGASTGFGLASRIVAAFGAGAKTIGVFFERPASGKRTASPGWYNTAAFEKTALAAGLYAKSINGDAFSDEIKQQTIDLIQKDWQGGVDLVIYSIASPRRVHPRTGEIFNSVLKPIGQTYHNKTVDVMTGEVSPVSIEPATEKEIRDTEAVMGGDDWALWINALFKYNCLAEGVKTVAFTYIGPELTHAVYRNGTIGRAKLHLEKTARELDTQLESALSGQALISVNKALVTQASAAIPVVPLYISLLYKIMKEKNIHEGCIEQMWRLFKERLYSNQNIPTDSEGRIRIDDWEMREDVQAEIKRLWESINTGNVETLSDIAGYREDFYKLFGFGLNGIDYERGVEIEKAIPSITVTPENPE.

Residues G48–F53, F74–E75, D111–A112, and I140–A141 each bind NAD(+). Y226 serves as a coordination point for substrate. Catalysis depends on Y236, which acts as the Proton donor. NAD(+) is bound by residues K245 and L275 to T277.

This sequence belongs to the TER reductase family. In terms of assembly, monomer.

The catalysed reaction is a 2,3-saturated acyl-[ACP] + NAD(+) = a (2E)-enoyl-[ACP] + NADH + H(+). It functions in the pathway lipid metabolism; fatty acid biosynthesis. Functionally, involved in the final reduction of the elongation cycle of fatty acid synthesis (FAS II). Catalyzes the reduction of a carbon-carbon double bond in an enoyl moiety that is covalently linked to an acyl carrier protein (ACP). This Coxiella burnetii (strain CbuK_Q154) (Coxiella burnetii (strain Q154)) protein is Enoyl-[acyl-carrier-protein] reductase [NADH].